We begin with the raw amino-acid sequence, 1449 residues long: uncharacterized protein (1449 aa).

Residues 1–13 (MELRSDASHKENV) are compositionally biased toward basic and acidic residues. Disordered stretches follow at residues 1-32 (MELR…RRSL), 123-201 (SNLS…LRSW), 258-298 (APQE…RRRR), 315-437 (LSDS…NKAQ), 523-551 (KQVQ…LGRS), 1257-1278 (DQGP…SKAH), and 1399-1449 (RLAA…QLQL). A compositionally biased stretch (polar residues) spans 123-133 (SNLSINETSSP). Composition is skewed to polar residues over residues 315 to 333 (LSDS…TLGT) and 384 to 394 (PCSSAFSNTAW). Basic and acidic residues predominate over residues 400–419 (QKGEEGAPRERVHREEERTA). The span at 426 to 437 (VPASSASKNKAQ) shows a compositional bias: polar residues. A compositionally biased stretch (basic and acidic residues) spans 1258–1270 (QGPRAHSSPEPRA).

This is an uncharacterized protein from Homo sapiens (Human).